We begin with the raw amino-acid sequence, 350 residues long: Melatonin receptor type 1A (350 aa).

Over Met1–Ala29 the chain is Extracellular. N-linked (GlcNAc...) asparagine glycosylation is found at Asn4 and Asn10. A helical transmembrane segment spans residues Leu30–Leu50. At Ser51 to Asn63 the chain is on the cytoplasmic side. A helical transmembrane segment spans residues Ile64 to Val84. Over Leu85–Val102 the chain is Extracellular. Cysteines 100 and 177 form a disulfide. Residues Ser103–Ile123 form a helical membrane-spanning segment. The Cytoplasmic segment spans residues Asn124–Lys142. A helical transmembrane segment spans residues Asn143 to Leu163. 2 residues coordinate melatonin: Asn162 and Gln181. Over Arg164–Tyr187 the chain is Extracellular. The helical transmembrane segment at Thr188–Leu208 threads the bilayer. At Arg209–Met240 the chain is on the cytoplasmic side. A helical transmembrane segment spans residues Phe241–Val261. Residues Ala262–Glu274 lie on the Extracellular side of the membrane. A helical transmembrane segment spans residues Trp275 to Tyr295. Residues Gly296–Val350 are Cytoplasmic-facing.

It belongs to the G-protein coupled receptor 1 family. In terms of tissue distribution, expressed in hypophyseal pars tuberalis and hypothalamic suprachiasmatic nuclei (SCN). Hippocampus.

Its subcellular location is the cell membrane. High affinity receptor for melatonin. Likely to mediate the reproductive and circadian actions of melatonin. The activity of this receptor is mediated by pertussis toxin sensitive G proteins that inhibit adenylate cyclase activity. Possibly involved in sleep induction, by melatonin activation of the potassium channel KCNMA1/BK and the dissociation of G-beta and G-gamma subunits, thereby decreasing synaptic transmission. The chain is Melatonin receptor type 1A (MTNR1A) from Homo sapiens (Human).